Here is a 1146-residue protein sequence, read N- to C-terminus: Reverse gyrase 1 (1146 aa).

The RG N-terminal-type zinc finger occupies 1–38; sequence MIKAIFDTLCPNCGGEISAERLLKGLPCEKCLPEEVNR. Residues cysteine 10, cysteine 13, cysteine 28, and cysteine 31 each contribute to the Zn(2+) site. ATP contacts are provided by residues glutamine 79 and 96–103; that span reads APTGVGKT. Positions 83-240 constitute a Helicase ATP-binding domain; the sequence is ARKVFLGRSF…RLKEKPNKSE (158 aa). A DEAD box motif is present at residues 197-200; sequence DDVD. Residues 412 to 565 enclose the Helicase C-terminal domain; sequence HLLWALLSLR…FKKIEEVDLK (154 aa). Positions 592–1146 are topoisomerase I; the sequence is EHVKPVLVVV…KVNEFEKANV (555 aa). Residues 596–728 enclose the Toprim domain; it reads PVLVVVESPN…NVERIEFHEV (133 aa). Residues glutamate 602 and aspartate 697 each coordinate Mg(2+). The Topo IA-type catalytic domain occupies 744-1142; the sequence is NENLVKAQLV…ELYKKVNEFE (399 aa). Tyrosine 891 (O-(5'-phospho-DNA)-tyrosine intermediate) is an active-site residue.

In the N-terminal section; belongs to the DEAD box helicase family. DDVD subfamily. The protein in the C-terminal section; belongs to the type IA topoisomerase family. As to quaternary structure, monomer. Zn(2+) serves as cofactor. Mg(2+) is required as a cofactor.

Its subcellular location is the cytoplasm. The catalysed reaction is ATP + H2O = ADP + phosphate + H(+). Its function is as follows. Modifies the topological state of DNA by introducing positive supercoils in an ATP-dependent process, increasing the linking number in steps of +1. Binds to single-stranded DNA, transiently cleaves and then rejoins the ends, introducing a positive supercoil in the process. The scissile phosphodiester is attacked by the catalytic tyrosine of the enzyme, resulting in the formation of a DNA-(5'-phosphotyrosyl)-enzyme intermediate. Probably involved in rewinding DNA strands in regions of the chromosome that have opened up to allow replication, transcription, DNA repair and/or for DNA protection. This chain is Reverse gyrase 1, found in Aquifex aeolicus (strain VF5).